A 294-amino-acid polypeptide reads, in one-letter code: Undecaprenyl-diphosphatase (294 aa).

Helical transmembrane passes span 39–59, 93–113, 123–143, 198–218, 232–252, and 268–288; these read PGAA…ILYF, ATLG…GFTL, NLWI…MVDA, SFLM…IKAV, PTLV…IGFL, and IGLA…AIDP.

This sequence belongs to the UppP family.

It is found in the cell membrane. The enzyme catalyses di-trans,octa-cis-undecaprenyl diphosphate + H2O = di-trans,octa-cis-undecaprenyl phosphate + phosphate + H(+). Catalyzes the dephosphorylation of undecaprenyl diphosphate (UPP). Confers resistance to bacitracin. The sequence is that of Undecaprenyl-diphosphatase from Bifidobacterium longum (strain DJO10A).